A 319-amino-acid chain; its full sequence is ATP-dependent 6-phosphofructokinase (319 aa).

G11 contacts ATP. 21–25 (RAVVR) serves as a coordination point for ADP. ATP is bound by residues 72 to 73 (RC) and 102 to 105 (GDGS). D103 provides a ligand contact to Mg(2+). A substrate-binding site is contributed by 125 to 127 (TID). Residue D127 is the Proton acceptor of the active site. R154 serves as a coordination point for ADP. Substrate contacts are provided by residues R162 and 169–171 (MGR). ADP is bound by residues 185–187 (GAE), R211, and 213–215 (KKH). Substrate is bound by residues E222, R243, and 249–252 (HVQR).

Belongs to the phosphofructokinase type A (PFKA) family. ATP-dependent PFK group I subfamily. Prokaryotic clade 'B1' sub-subfamily. As to quaternary structure, homotetramer. It depends on Mg(2+) as a cofactor.

Its subcellular location is the cytoplasm. The catalysed reaction is beta-D-fructose 6-phosphate + ATP = beta-D-fructose 1,6-bisphosphate + ADP + H(+). It functions in the pathway carbohydrate degradation; glycolysis; D-glyceraldehyde 3-phosphate and glycerone phosphate from D-glucose: step 3/4. Its activity is regulated as follows. Allosterically activated by ADP and other diphosphonucleosides, and allosterically inhibited by phosphoenolpyruvate. In terms of biological role, catalyzes the phosphorylation of D-fructose 6-phosphate to fructose 1,6-bisphosphate by ATP, the first committing step of glycolysis. The protein is ATP-dependent 6-phosphofructokinase of Bacillus mycoides (strain KBAB4) (Bacillus weihenstephanensis).